A 274-amino-acid chain; its full sequence is NH(3)-dependent NAD(+) synthetase (274 aa).

46–53 contacts ATP; that stretch reads GISGGQDS. A Mg(2+)-binding site is contributed by D52. R140 contributes to the deamido-NAD(+) binding site. T160 serves as a coordination point for ATP. Residue E165 participates in Mg(2+) binding. K173 and D180 together coordinate deamido-NAD(+). ATP contacts are provided by K189 and T211. 260-261 provides a ligand contact to deamido-NAD(+); that stretch reads HK.

It belongs to the NAD synthetase family. As to quaternary structure, homodimer.

It carries out the reaction deamido-NAD(+) + NH4(+) + ATP = AMP + diphosphate + NAD(+) + H(+). It participates in cofactor biosynthesis; NAD(+) biosynthesis; NAD(+) from deamido-NAD(+) (ammonia route): step 1/1. Its function is as follows. Catalyzes the ATP-dependent amidation of deamido-NAD to form NAD. Uses ammonia as a nitrogen source. This chain is NH(3)-dependent NAD(+) synthetase, found in Rhodococcus erythropolis (strain PR4 / NBRC 100887).